The following is a 326-amino-acid chain: Transposase InsH for insertion sequence element IS5Y (326 aa).

Belongs to the transposase 11 family.

Its function is as follows. Involved in the transposition of the insertion sequence IS5. The chain is Transposase InsH for insertion sequence element IS5Y (insH5) from Escherichia coli (strain K12).